A 398-amino-acid polypeptide reads, in one-letter code: Carbamoyl phosphate synthase small chain (398 aa).

Positions 1–199 are CPSase; it reads MTPAWATEKP…WNEGFGEQAE (199 aa). L-glutamine-binding residues include Ser54, Gly251, and Gly253. A Glutamine amidotransferase type-1 domain is found at 203-391; sequence HVVAIDYGVK…VNLIREKRGE (189 aa). The active-site Nucleophile is the Cys280. Positions 281, 284, 322, 324, and 325 each coordinate L-glutamine. Residues His364 and Glu366 contribute to the active site.

Belongs to the CarA family. As to quaternary structure, composed of two chains; the small (or glutamine) chain promotes the hydrolysis of glutamine to ammonia, which is used by the large (or ammonia) chain to synthesize carbamoyl phosphate. Tetramer of heterodimers (alpha,beta)4.

It carries out the reaction hydrogencarbonate + L-glutamine + 2 ATP + H2O = carbamoyl phosphate + L-glutamate + 2 ADP + phosphate + 2 H(+). The enzyme catalyses L-glutamine + H2O = L-glutamate + NH4(+). It functions in the pathway amino-acid biosynthesis; L-arginine biosynthesis; carbamoyl phosphate from bicarbonate: step 1/1. The protein operates within pyrimidine metabolism; UMP biosynthesis via de novo pathway; (S)-dihydroorotate from bicarbonate: step 1/3. Its function is as follows. Small subunit of the glutamine-dependent carbamoyl phosphate synthetase (CPSase). CPSase catalyzes the formation of carbamoyl phosphate from the ammonia moiety of glutamine, carbonate, and phosphate donated by ATP, constituting the first step of 2 biosynthetic pathways, one leading to arginine and/or urea and the other to pyrimidine nucleotides. The small subunit (glutamine amidotransferase) binds and cleaves glutamine to supply the large subunit with the substrate ammonia. This Mesorhizobium japonicum (strain LMG 29417 / CECT 9101 / MAFF 303099) (Mesorhizobium loti (strain MAFF 303099)) protein is Carbamoyl phosphate synthase small chain.